A 339-amino-acid chain; its full sequence is Large ribosomal subunit protein uL10 (339 aa).

Positions 300–339 are disordered; the sequence is AAAQATPSVEEREEEEKPEEEEEEEEKEEEAIEGLGALFG. A compositionally biased stretch (acidic residues) spans 310–331; it reads EREEEEKPEEEEEEEEKEEEAI.

Belongs to the universal ribosomal protein uL10 family. As to quaternary structure, part of the 50S ribosomal subunit. Forms part of the ribosomal stalk which helps the ribosome interact with GTP-bound translation factors. Forms a heptameric L10(L12)2(L12)2(L12)2 complex, where L10 forms an elongated spine to which the L12 dimers bind in a sequential fashion.

Forms part of the ribosomal stalk, playing a central role in the interaction of the ribosome with GTP-bound translation factors. The chain is Large ribosomal subunit protein uL10 from Archaeoglobus fulgidus (strain ATCC 49558 / DSM 4304 / JCM 9628 / NBRC 100126 / VC-16).